A 364-amino-acid polypeptide reads, in one-letter code: MIRAFDQLSLPLLRWLDAEDAHRLAIQGLKLLPAVKPRADDAKLAVRAFGLNFPNPVGMAAGFDKNAEVPDALLRLGFGFVEIGSVTPRPQSGNPRPRLFRLERDEAVINRMGFNNDGAEIVLRRLAGRANQGGIVGVNVGANKDSADRVADYVRLIETFAPVASYFTVNISSPNTPGLRNLQQASQLDDLLTKVLEARDRVRRKAGDTPVLLKIAPDLSLAELDDVVHVARSRGVDGMIVSNTTLARPNSLREQMRAKEQGGLSGRPLFRLSTRMVAETFVRVEGAFPLIGVGGIDTGGAALTKIRAGASLIQLYSSLVYKGLGLVESIKADLTSTLLRTGRESLSEIVGADAATITAEDWPV.

FMN contacts are provided by residues A61–K65 and S85. K65 provides a ligand contact to substrate. Residue N110–F114 coordinates substrate. FMN contacts are provided by N139 and N170. N170 is a substrate binding site. The active-site Nucleophile is the S173. Substrate is bound at residue N175. Residues K214 and S242 each contribute to the FMN site. Residue N243–T244 coordinates substrate. FMN is bound by residues G266, G295, and Y316–S317.

It belongs to the dihydroorotate dehydrogenase family. Type 2 subfamily. Monomer. FMN serves as cofactor.

The protein localises to the cell membrane. It catalyses the reaction (S)-dihydroorotate + a quinone = orotate + a quinol. The protein operates within pyrimidine metabolism; UMP biosynthesis via de novo pathway; orotate from (S)-dihydroorotate (quinone route): step 1/1. Catalyzes the conversion of dihydroorotate to orotate with quinone as electron acceptor. The chain is Dihydroorotate dehydrogenase (quinone) from Bradyrhizobium sp. (strain ORS 278).